The following is a 208-amino-acid chain: Holliday junction resolvase RecU (208 aa).

The segment at 1–25 (MNYPNGKPFNRNKTKVGRTNDHKSS) is disordered. Residues T87, D89, E102, and Q121 each coordinate Mg(2+).

The protein belongs to the RecU family. Mg(2+) is required as a cofactor.

It localises to the cytoplasm. It carries out the reaction Endonucleolytic cleavage at a junction such as a reciprocal single-stranded crossover between two homologous DNA duplexes (Holliday junction).. In terms of biological role, endonuclease that resolves Holliday junction intermediates in genetic recombination. Cleaves mobile four-strand junctions by introducing symmetrical nicks in paired strands. Promotes annealing of linear ssDNA with homologous dsDNA. Required for DNA repair, homologous recombination and chromosome segregation. In Staphylococcus carnosus (strain TM300), this protein is Holliday junction resolvase RecU.